Here is a 419-residue protein sequence, read N- to C-terminus: Ribosomal RNA large subunit methyltransferase G (419 aa).

The span at 386–408 shows a compositional bias: basic and acidic residues; sequence KAEPFETHPTEAEAKVEVTESKP. The segment at 386–419 is disordered; the sequence is KAEPFETHPTEAEAKVEVTESKPHPQSSLYGTKK. The span at 409–419 shows a compositional bias: polar residues; it reads HPQSSLYGTKK.

Belongs to the methyltransferase superfamily. RlmG family.

Its subcellular location is the cytoplasm. The enzyme catalyses guanosine(1835) in 23S rRNA + S-adenosyl-L-methionine = N(2)-methylguanosine(1835) in 23S rRNA + S-adenosyl-L-homocysteine + H(+). Its function is as follows. Specifically methylates the guanine in position 1835 (m2G1835) of 23S rRNA. The sequence is that of Ribosomal RNA large subunit methyltransferase G from Shewanella woodyi (strain ATCC 51908 / MS32).